The following is a 142-amino-acid chain: Glutamate-rich protein 2 (142 aa).

Disordered regions lie at residues 1-55 (MSKN…HAPL) and 104-142 (EKAQ…CEDG). Positions 9 to 27 (EQEKNNEHCPEDINDKLSE) are enriched in basic and acidic residues. A compositionally biased stretch (acidic residues) spans 28 to 43 (STDDDGEDTSDEDKEE). Residues 44–53 (DSNPNKDTHA) show a composition bias toward basic and acidic residues. Residues 109–142 (LEEDDDESEEDNSESEGESTEDPSEESSDECEDG) are compositionally biased toward acidic residues.

The protein is Glutamate-rich protein 2 (ERICH2) of Bos taurus (Bovine).